Consider the following 373-residue polypeptide: GTPase Obg (373 aa).

In terms of domain architecture, Obg spans methionine 1–leucine 159. The interval leucine 128–glycine 147 is disordered. The OBG-type G domain maps to alanine 160 to serine 334. Residues glycine 166 to serine 173, phenylalanine 191 to alanine 195, aspartate 213 to glycine 216, asparagine 284 to aspartate 287, and serine 315 to leucine 317 each bind GTP. Residues serine 173 and threonine 193 each contribute to the Mg(2+) site. Residues phenylalanine 354 to valine 373 are disordered. Residues glutamine 359–valine 373 are compositionally biased toward low complexity.

This sequence belongs to the TRAFAC class OBG-HflX-like GTPase superfamily. OBG GTPase family. In terms of assembly, monomer. Mg(2+) serves as cofactor.

The protein localises to the cytoplasm. In terms of biological role, an essential GTPase which binds GTP, GDP and possibly (p)ppGpp with moderate affinity, with high nucleotide exchange rates and a fairly low GTP hydrolysis rate. Plays a role in control of the cell cycle, stress response, ribosome biogenesis and in those bacteria that undergo differentiation, in morphogenesis control. This chain is GTPase Obg, found in Paraburkholderia phytofirmans (strain DSM 17436 / LMG 22146 / PsJN) (Burkholderia phytofirmans).